The chain runs to 467 residues: ATP synthase subunit beta (467 aa).

156 to 163 provides a ligand contact to ATP; that stretch reads GGAGVGKT.

It belongs to the ATPase alpha/beta chains family. In terms of assembly, F-type ATPases have 2 components, CF(1) - the catalytic core - and CF(0) - the membrane proton channel. CF(1) has five subunits: alpha(3), beta(3), gamma(1), delta(1), epsilon(1). CF(0) has three main subunits: a(1), b(2) and c(9-12). The alpha and beta chains form an alternating ring which encloses part of the gamma chain. CF(1) is attached to CF(0) by a central stalk formed by the gamma and epsilon chains, while a peripheral stalk is formed by the delta and b chains.

Its subcellular location is the cell inner membrane. It catalyses the reaction ATP + H2O + 4 H(+)(in) = ADP + phosphate + 5 H(+)(out). Produces ATP from ADP in the presence of a proton gradient across the membrane. The catalytic sites are hosted primarily by the beta subunits. In Cupriavidus metallidurans (strain ATCC 43123 / DSM 2839 / NBRC 102507 / CH34) (Ralstonia metallidurans), this protein is ATP synthase subunit beta.